The chain runs to 546 residues: Probable sucrose-6-phosphate hydrolase (546 aa).

Substrate is bound by residues 105 to 108 (LLND), glutamine 124, 167 to 168 (FS), 228 to 229 (RD), and glutamate 283. Aspartate 108 is an active-site residue.

This sequence belongs to the glycosyl hydrolase 32 family.

Its subcellular location is the cytoplasm. It catalyses the reaction Hydrolysis of terminal non-reducing beta-D-fructofuranoside residues in beta-D-fructofuranosides.. The protein operates within glycan biosynthesis; sucrose metabolism. In terms of biological role, enables the bacterium to metabolize sucrose as a sole carbon source. The protein is Probable sucrose-6-phosphate hydrolase of Vibrio cholerae.